Reading from the N-terminus, the 108-residue chain is Urease subunit beta (108 aa).

The protein belongs to the urease beta subunit family. In terms of assembly, heterotrimer of UreA (gamma), UreB (beta) and UreC (alpha) subunits. Three heterotrimers associate to form the active enzyme.

The protein resides in the cytoplasm. The catalysed reaction is urea + 2 H2O + H(+) = hydrogencarbonate + 2 NH4(+). It participates in nitrogen metabolism; urea degradation; CO(2) and NH(3) from urea (urease route): step 1/1. In Chromohalobacter salexigens (strain ATCC BAA-138 / DSM 3043 / CIP 106854 / NCIMB 13768 / 1H11), this protein is Urease subunit beta.